We begin with the raw amino-acid sequence, 505 residues long: Mannosylglucosyl-3-phosphoglycerate synthase (505 aa).

Monomer in solution.

It catalyses the reaction (2R)-2-O-(alpha-D-glucopyranosyl)-3-phospho-glycerate + GDP-alpha-D-mannose = (2R)-2-O-[alpha-D-mannopyranosyl-(1-&gt;2)-alpha-D-glucopyranosyl]-3-phospho-glycerate + GDP + H(+). With respect to regulation, not strictly dependent on divalent cations, but the presence of Mn(2+), Ca(2+), Mg(2+) or Co(2+) stimulates activity. In terms of biological role, involved in the biosynthesis of the compatible solute mannosylglucosylglycerate through a phosphorylating pathway. Catalyzes the conversion of glucosyl-3-phosphoglycerate (GPG) to mannosylglucosyl-3-phosphoglycerate (MGPG). The protein is Mannosylglucosyl-3-phosphoglycerate synthase of Petrotoga mobilis (strain DSM 10674 / SJ95).